A 234-amino-acid chain; its full sequence is uncharacterized protein (234 aa).

The disordered stretch occupies residues 212–234 (GKHLKLDSNTTENKTTKQNETGG). Over residues 220-234 (NTTENKTTKQNETGG) the composition is skewed to low complexity.

This is an uncharacterized protein from Methanothermobacter thermautotrophicus (Methanobacterium thermoformicicum).